The chain runs to 504 residues: Cytochrome P450 2K1 (504 aa).

Cys447 serves as a coordination point for heme.

This sequence belongs to the cytochrome P450 family. Heme serves as cofactor.

Its subcellular location is the endoplasmic reticulum membrane. It is found in the microsome membrane. It carries out the reaction an organic molecule + reduced [NADPH--hemoprotein reductase] + O2 = an alcohol + oxidized [NADPH--hemoprotein reductase] + H2O + H(+). This is Cytochrome P450 2K1 (cyp2k1) from Oncorhynchus mykiss (Rainbow trout).